The sequence spans 270 residues: Type III pantothenate kinase (270 aa).

Asp6–Val13 is a binding site for ATP. Gly109–Arg112 is a binding site for substrate. The Proton acceptor role is filled by Asp111. Residue Asp131 coordinates K(+). An ATP-binding site is contributed by Ser134. Thr186 is a binding site for substrate.

Belongs to the type III pantothenate kinase family. Homodimer. NH4(+) is required as a cofactor. It depends on K(+) as a cofactor.

The protein resides in the cytoplasm. It catalyses the reaction (R)-pantothenate + ATP = (R)-4'-phosphopantothenate + ADP + H(+). It participates in cofactor biosynthesis; coenzyme A biosynthesis; CoA from (R)-pantothenate: step 1/5. Its function is as follows. Catalyzes the phosphorylation of pantothenate (Pan), the first step in CoA biosynthesis. This is Type III pantothenate kinase from Mycolicibacterium gilvum (strain PYR-GCK) (Mycobacterium gilvum (strain PYR-GCK)).